The chain runs to 318 residues: Cephalosporin-C deacetylase (318 aa).

Y91 serves as a coordination point for substrate. S181 functions as the Nucleophile in the catalytic mechanism. Active-site charge relay system residues include D269 and H298.

The protein belongs to the carbohydrate esterase 7 family. In terms of assembly, homohexamer.

The protein resides in the cytoplasm. It catalyses the reaction Deacetylation of xylans and xylo-oligosaccharides.. The catalysed reaction is cephalosporin C + H2O = deacetylcephalosporin C + acetate + H(+). Esterase that removed acetyl groups from a number of O-acetylated small substrates, such as acetylated xylose, short xylooligosaccharides and cephalosporin C. Has no activity towards polymeric acetylated xylan. Cannot cleave amide linkages. The sequence is that of Cephalosporin-C deacetylase (cah) from Bacillus subtilis (strain 168).